The primary structure comprises 896 residues: Serine/threonine-protein kinase TAO3 (896 aa).

Residues 24–277 (FVDLHEIGHG…SLELLRHDFV (254 aa)) enclose the Protein kinase domain. ATP-binding positions include 30–38 (IGHGSFGAV) and Lys-53. Catalysis depends on Asp-147, which acts as the Proton acceptor. Disordered stretches follow at residues 316–366 (SRNG…SVNS) and 403–423 (DEAD…VQSQ). Over residues 334 to 348 (GTSLTRKMDSLGSNH) the composition is skewed to polar residues. Low complexity predominate over residues 349-366 (SIPSTSVSTGSQSSSVNS). A compositionally biased stretch (basic and acidic residues) spans 403 to 414 (DEADHRDPRPEL). 3 coiled-coil regions span residues 450–513 (EQEN…SKRQ), 545–650 (SFLE…LIRQ), and 752–873 (LKSL…IETF). Basic and acidic residues predominate over residues 565–587 (LNEDHSTPKKEKQERISKHKENL). The interval 565–593 (LNEDHSTPKKEKQERISKHKENLQHTQAE) is disordered.

The protein belongs to the protein kinase superfamily. STE Ser/Thr protein kinase family. STE20 subfamily.

Its subcellular location is the cytoplasm. The protein resides in the cell membrane. The protein localises to the membrane raft. It localises to the lipid droplet. It catalyses the reaction L-seryl-[protein] + ATP = O-phospho-L-seryl-[protein] + ADP + H(+). It carries out the reaction L-threonyl-[protein] + ATP = O-phospho-L-threonyl-[protein] + ADP + H(+). Its function is as follows. Serine/threonine-protein kinase that acts as a regulator of the p38/MAPK14 stress-activated MAPK cascade and of the MAPK8/JNK cascade. In response to DNA damage, involved in the G2/M transition DNA damage checkpoint by activating the p38/MAPK14 stress-activated MAPK cascade, probably by mediating phosphorylation of upstream MAP kinase kinases. Inhibits basal activity of the MAPK8/JNK cascade. This Xenopus laevis (African clawed frog) protein is Serine/threonine-protein kinase TAO3 (taok3).